Here is a 128-residue protein sequence, read N- to C-terminus: MLIGVGTDIVQIPRIEKILNLYQELFAKKILTSQELKQFTLLDKPNHATFLAKRFAAKEAVSKAFGVGIGQGINFKNITIINDNLGKPVVEVSSHYTNKLIPFHIHLSLSDDYPICIAFAIVESNCSV.

Residues Asp-8 and Glu-59 each contribute to the Mg(2+) site.

The protein belongs to the P-Pant transferase superfamily. AcpS family. Mg(2+) serves as cofactor.

The protein localises to the cytoplasm. It catalyses the reaction apo-[ACP] + CoA = holo-[ACP] + adenosine 3',5'-bisphosphate + H(+). Transfers the 4'-phosphopantetheine moiety from coenzyme A to a Ser of acyl-carrier-protein. The chain is Holo-[acyl-carrier-protein] synthase from Rickettsia typhi (strain ATCC VR-144 / Wilmington).